A 578-amino-acid polypeptide reads, in one-letter code: Probable arginine--tRNA ligase, mitochondrial (578 aa).

A mitochondrion-targeting transit peptide spans 1 to 16; it reads MACGFRRSIACQLSRV. Residues 133-135, His-144, Tyr-322, Asp-326, and Gln-350 contribute to the L-arginine site; that span reads SPN. Positions 133–144 match the 'HIGH' region motif; the sequence is SPNIAKKFHVGH. Lys-568 carries the N6-acetyllysine modification.

It belongs to the class-I aminoacyl-tRNA synthetase family.

It localises to the mitochondrion membrane. The enzyme catalyses tRNA(Arg) + L-arginine + ATP = L-arginyl-tRNA(Arg) + AMP + diphosphate. Functionally, catalyzes the attachment of arginine to tRNA(Arg) in a two-step reaction: arginine is first activated by ATP to form Arg-AMP and then transferred to the acceptor end of tRNA(Arg). The polypeptide is Probable arginine--tRNA ligase, mitochondrial (Rars2) (Mus musculus (Mouse)).